Here is a 205-residue protein sequence, read N- to C-terminus: Cerebellin-3 (205 aa).

Positions 1–32 (MLGAKPHWLPGPLHSPGLPLVLVLLALGAGWA) are cleaved as a signal peptide. A C1q domain is found at 67-205 (APPGRVAFAA…SFSGFLIFPL (139 aa)). Residues 72 to 205 (VAFAAVRSHH…SFSGFLIFPL (134 aa)) are necessary for interaction with CBLN3, and homotrimerization. An N-linked (GlcNAc...) asparagine glycan is attached at Asn90.

As to quaternary structure, heterohexamer; disulfide-linked heterotrimers. Interacts with CBLN1. May also form oligomers with CBLN2 and CBLN4.

It is found in the endoplasmic reticulum. It localises to the golgi apparatus. The protein localises to the cis-Golgi network. The protein resides in the secreted. Its subcellular location is the synapse. In terms of biological role, may be involved in synaptic functions in the CNS. In Homo sapiens (Human), this protein is Cerebellin-3 (CBLN3).